Consider the following 475-residue polypeptide: UDP-glycosyltransferase 76E1 (475 aa).

The active-site Proton acceptor is the H19. Position 19 (H19) interacts with an anthocyanidin. D109 functions as the Charge relay in the catalytic mechanism. Residues T131, A329, Q331, H346, W349, N350, S351, and E354 each coordinate UDP-alpha-D-glucose. A369 contacts an anthocyanidin. Positions 370 and 371 each coordinate UDP-alpha-D-glucose.

Belongs to the UDP-glycosyltransferase family. As to expression, expressed in flowers and fruits.

It is found in the cytoplasm. Its subcellular location is the nucleus. It carries out the reaction 2-cis-(+)-abscisate + UDP-alpha-D-glucose = beta-D-glucopyranosyl cis-(+)-abscisate + UDP. In terms of biological role, glucosyltransferase acting on abscisic acid (ABA) but not on auxin (IAA). This chain is UDP-glycosyltransferase 76E1, found in Solanum lycopersicum (Tomato).